Reading from the N-terminus, the 562-residue chain is Glutamate--tRNA ligase (562 aa).

The 'HIGH' region motif lies at Pro101–His111.

Belongs to the class-I aminoacyl-tRNA synthetase family. Glutamate--tRNA ligase type 2 subfamily.

It localises to the cytoplasm. The enzyme catalyses tRNA(Glu) + L-glutamate + ATP = L-glutamyl-tRNA(Glu) + AMP + diphosphate. Functionally, catalyzes the attachment of glutamate to tRNA(Glu) in a two-step reaction: glutamate is first activated by ATP to form Glu-AMP and then transferred to the acceptor end of tRNA(Glu). The polypeptide is Glutamate--tRNA ligase (Cenarchaeum symbiosum (strain A)).